We begin with the raw amino-acid sequence, 209 residues long: Uracil phosphoribosyltransferase (209 aa).

5-phospho-alpha-D-ribose 1-diphosphate-binding positions include arginine 79, arginine 104, and 131-139 (DPMLATGAS). Uracil is bound by residues isoleucine 194 and 199–201 (GDA). Aspartate 200 is a binding site for 5-phospho-alpha-D-ribose 1-diphosphate.

It belongs to the UPRTase family. Requires Mg(2+) as cofactor.

It carries out the reaction UMP + diphosphate = 5-phospho-alpha-D-ribose 1-diphosphate + uracil. Its pathway is pyrimidine metabolism; UMP biosynthesis via salvage pathway; UMP from uracil: step 1/1. Allosterically activated by GTP. In terms of biological role, catalyzes the conversion of uracil and 5-phospho-alpha-D-ribose 1-diphosphate (PRPP) to UMP and diphosphate. The sequence is that of Uracil phosphoribosyltransferase from Staphylococcus carnosus (strain TM300).